Here is a 413-residue protein sequence, read N- to C-terminus: DNA polymerase IV 1 (413 aa).

The UmuC domain maps to 7 to 188; it reads IFHVDMNSFY…LPIEEMYGIG (182 aa). Mg(2+)-binding residues include Asp11 and Asp107. Residue Glu108 is part of the active site.

This sequence belongs to the DNA polymerase type-Y family. In terms of assembly, monomer. Mg(2+) serves as cofactor.

The protein localises to the cytoplasm. It carries out the reaction DNA(n) + a 2'-deoxyribonucleoside 5'-triphosphate = DNA(n+1) + diphosphate. Poorly processive, error-prone DNA polymerase involved in untargeted mutagenesis. Copies undamaged DNA at stalled replication forks, which arise in vivo from mismatched or misaligned primer ends. These misaligned primers can be extended by PolIV. Exhibits no 3'-5' exonuclease (proofreading) activity. May be involved in translesional synthesis, in conjunction with the beta clamp from PolIII. In Halalkalibacterium halodurans (strain ATCC BAA-125 / DSM 18197 / FERM 7344 / JCM 9153 / C-125) (Bacillus halodurans), this protein is DNA polymerase IV 1 (dinB1).